A 94-amino-acid polypeptide reads, in one-letter code: Putative regulatory protein Sfum_3631 (94 aa).

Belongs to the RemA family.

The sequence is that of Putative regulatory protein Sfum_3631 from Syntrophobacter fumaroxidans (strain DSM 10017 / MPOB).